A 130-amino-acid polypeptide reads, in one-letter code: Transcription antitermination protein NusB (130 aa).

Belongs to the NusB family.

In terms of biological role, involved in transcription antitermination. Required for transcription of ribosomal RNA (rRNA) genes. Binds specifically to the boxA antiterminator sequence of the ribosomal RNA (rrn) operons. The protein is Transcription antitermination protein NusB of Macrococcus caseolyticus (strain JCSC5402) (Macrococcoides caseolyticum).